Consider the following 670-residue polypeptide: DNA ligase (670 aa).

Residues 31-35, 76-77, and glutamate 108 each bind NAD(+); these read DAEYD and SL. The active-site N6-AMP-lysine intermediate is lysine 110. The NAD(+) site is built by arginine 131, glutamate 166, lysine 271, and lysine 295. 4 residues coordinate Zn(2+): cysteine 388, cysteine 391, cysteine 406, and cysteine 412. One can recognise a BRCT domain in the interval 579-668; that stretch reads NIGGSLSGKK…NTPALKKETS (90 aa).

It belongs to the NAD-dependent DNA ligase family. LigA subfamily. It depends on Mg(2+) as a cofactor. Requires Mn(2+) as cofactor.

It catalyses the reaction NAD(+) + (deoxyribonucleotide)n-3'-hydroxyl + 5'-phospho-(deoxyribonucleotide)m = (deoxyribonucleotide)n+m + AMP + beta-nicotinamide D-nucleotide.. Functionally, DNA ligase that catalyzes the formation of phosphodiester linkages between 5'-phosphoryl and 3'-hydroxyl groups in double-stranded DNA using NAD as a coenzyme and as the energy source for the reaction. It is essential for DNA replication and repair of damaged DNA. The sequence is that of DNA ligase from Neorickettsia sennetsu (strain ATCC VR-367 / Miyayama) (Ehrlichia sennetsu).